Here is a 583-residue protein sequence, read N- to C-terminus: Sensor protein SrrB (583 aa).

The Cytoplasmic portion of the chain corresponds to 1 to 11; that stretch reads MMSRLNSVVIK. A helical membrane pass occupies residues 12-32; the sequence is LWLTIILIVTTVLILLSIALI. Residues 33-174 lie on the Extracellular side of the membrane; sequence TFMQYYFTQE…SIEDTNNAIT (142 aa). The helical transmembrane segment at 175 to 195 threads the bilayer; the sequence is IITIITAVIFLTITTVFAFFL. Residues 196–583 lie on the Cytoplasmic side of the membrane; the sequence is SSRITKPLRR…TFIIKLPKPE (388 aa). Residues 197–249 form the HAMP domain; that stretch reads SRITKPLRRLRDQATRVSEGDYSYKPSVTTKDEIGQLSQAFNQMSTEIEEHVD. The Histidine kinase domain occupies 366-583; that stretch reads NVSHELRTPI…TFIIKLPKPE (218 aa). The residue at position 369 (His-369) is a Phosphohistidine; by autocatalysis.

The protein resides in the cell membrane. The catalysed reaction is ATP + protein L-histidine = ADP + protein N-phospho-L-histidine.. Functionally, member of the two-component regulatory system SrrA/SrrB, which is involved in the global regulation of staphylococcal virulence factors in response to environmental oxygen levels as well as biofilm formation. Also plays an essential role in host-derived nitric oxide resistance by regulating hmp/flavohemoglobin, an enzyme that detoxifies nitric oxide by converting it to nitrate. Functions as a sensor protein kinase which is autophosphorylated at a histidine residue and transfers its phosphate group to SrrA. In turn, SrrA binds to the upstream promoter regions of the target genes to positively and negatively regulate their expression. The protein is Sensor protein SrrB (srrB) of Staphylococcus aureus.